We begin with the raw amino-acid sequence, 301 residues long: Tegument protein VP22 (301 aa).

Positions 1–171 (MTSRRSVKSG…PTRSKTPAQG (171 aa)) are disordered. The segment covering 113 to 124 (RTPTTAPRAPRT) has biased composition (low complexity). Positions 163–166 (TRSK) match the Nuclear localization signal motif. The interaction with gE stretch occupies residues 174 to 267 (RKLHFSTAPP…LVNPDVVQDV (94 aa)). The Nuclear export signal motif lies at 232–244 (LNELLGITTIRVT). Low complexity predominate over residues 269–281 (AATATRGRSAASR). The disordered stretch occupies residues 269–301 (AATATRGRSAASRPTERPRAPARSASRPRRPVE).

It belongs to the alphaherpesvirinae VP22 tegument protein family. In terms of assembly, interacts with gE (via C-terminus); this interaction is necessary for the recruitment of VP22 to the Golgi and its packaging into virions. Interacts with gM (via C-terminus). Interacts with VP16; this interaction allows the formation of a tripartite complex composed of VP16, VP22 and UL41/VHS. According to a report interacts with gD (via C-terminus). According another publication, does not interact with gD. Interacts with host CGAS. Interacts with host SET; this interaction may interfere with SET-mediated nucleosomal deposition onto the viral genome. Interacts with the capsid-binding protein UL16. Post-translationally, highly phosphorylated in the host cell. Packaging is selective for underphosphorylated forms.

It localises to the virion tegument. The protein resides in the host cytoplasm. Its subcellular location is the host nucleus. It is found in the host Golgi apparatus. Tegument protein that plays different roles during the time course of infection. Participates in both the accumulation of viral mRNAs and viral protein translation at late time of infection. Modulates the RNase activity of the virion host shutoff protein UL41 probably to ensure necessary levels of key cellular mRNAs and proteins. Plays a role in microtubule reorganization that occurs after viral infection by stabilizing microtubule network. Finally, may prevent nucleosomal deposition onto the viral genome by interacting with and inhibiting host SET. Plays a role in the inhibition of host innate immune system by targeting the CGAS enzymatic activity which is the principal cytosolic DNA sensor that detects invading viral DNA. Acts by mediating disruption of liquid-like droplets in which CGAS is activated, thereby preventing CGAS activity. This chain is Tegument protein VP22, found in Human herpesvirus 1 (strain 17) (HHV-1).